The following is a 374-amino-acid chain: Putative clathrin assembly protein At1g33340 (374 aa).

Positions Y30 to L163 constitute an ENTH domain.

Its subcellular location is the membrane. The protein localises to the clathrin-coated pit. The protein resides in the golgi apparatus. It localises to the cytoplasmic vesicle. It is found in the clathrin-coated vesicle. The chain is Putative clathrin assembly protein At1g33340 from Arabidopsis thaliana (Mouse-ear cress).